Here is a 271-residue protein sequence, read N- to C-terminus: Potential ATP-binding protein (271 aa).

34–41 (GQPGVGKT) is an ATP binding site.

The protein is Potential ATP-binding protein of Staphylococcus aureus.